Reading from the N-terminus, the 146-residue chain is NADH-ubiquinone oxidoreductase chain 6 (146 aa).

The next 4 membrane-spanning stretches (helical) occupy residues 10-30 (LTAI…ILFV), 41-61 (FVLM…MLFL), 75-95 (GTIT…LDIT), and 124-144 (AMLL…AMSI).

Belongs to the complex I subunit 6 family.

Its subcellular location is the mitochondrion membrane. It catalyses the reaction a ubiquinone + NADH + 5 H(+)(in) = a ubiquinol + NAD(+) + 4 H(+)(out). Core subunit of the mitochondrial membrane respiratory chain NADH dehydrogenase (Complex I) that is believed to belong to the minimal assembly required for catalysis. Complex I functions in the transfer of electrons from NADH to the respiratory chain. The immediate electron acceptor for the enzyme is believed to be ubiquinone. This is NADH-ubiquinone oxidoreductase chain 6 (ND6) from Debaryomyces hansenii (strain ATCC 36239 / CBS 767 / BCRC 21394 / JCM 1990 / NBRC 0083 / IGC 2968) (Yeast).